A 1077-amino-acid chain; its full sequence is Endo-1,4-beta-xylanase Y (1077 aa).

The N-terminal stretch at 1–26 (MKNKRVLAKITALVVLLGVFFVLPSN) is a signal peptide. Residues 33-180 (DYEVVHDTFE…IFDDVTITRK (148 aa)) enclose the CBM-cenC 1 domain. The GH10 domain maps to 189-538 (YAANAVLKDM…KPAYNAVASI (350 aa)). The Proton donor role is filled by glutamate 337. The Nucleophile role is filled by glutamate 460. Positions 543–563 (EWGDGNNPAGGGGGGKPEEPD) are disordered. The CBM-cenC 2 domain occupies 565 to 714 (NGYYYHDTFE…YIDEAIGAVA (150 aa)). The 69-residue stretch at 728–796 (PPVLLGDVNG…LLRVIDKFPV (69 aa)) folds into the Dockerin domain.

The protein belongs to the glycosyl hydrolase 10 (cellulase F) family.

The catalysed reaction is Endohydrolysis of (1-&gt;4)-beta-D-xylosidic linkages in xylans.. In Acetivibrio thermocellus (Hungateiclostridium thermocellum), this protein is Endo-1,4-beta-xylanase Y (xynY).